The following is a 1249-amino-acid chain: Calmodulin-regulated spectrin-associated protein 3 (1249 aa).

Disordered stretches follow at residues 183–205 (KTEQ…APAQ), 328–385 (PDGH…SMSH), 430–457 (VSSD…GDLP), 473–609 (LLPD…RLEE), 632–696 (LGKS…HEGL), 714–1029 (QRDM…SALA), and 1061–1111 (NNLG…TGPR). T184 is modified (phosphothreonine). A compositionally biased stretch (low complexity) spans 189–205 (AQRASPAAPADGAAPAQ). Phosphoserine is present on S193. A Calponin-homology (CH) domain is found at 203 to 312 (PAQPSIRYRK…LVVMLAELFM (110 aa)). Phosphoserine occurs at positions 334, 341, 347, 351, 368, 373, and 382. The span at 341-352 (SPPQNNSGSSSP) shows a compositional bias: low complexity. Positions 364 to 383 (GGPQSPLRGSTGSLKSSPSM) are enriched in polar residues. The span at 437–454 (PPRPAPARTPTQPPPEPG) shows a compositional bias: pro residues. A phosphoserine mark is found at S547, S554, and S560. A compositionally biased stretch (basic and acidic residues) spans 568–579 (AERKKQLVKAEA). The segment covering 594 to 604 (EALSSEMSELS) has biased composition (low complexity). Residues 594-628 (EALSSEMSELSARLEEKRRAIEAQKRRIEAIFAKH) adopt a coiled-coil conformation. A compositionally biased stretch (acidic residues) spans 647–657 (GEAEAEAEEAD). The residue at position 685 (S685) is a Phosphoserine. Residues 696-729 (LGEYNRAVSKLSAALSSLQRDMQRLTDQQQRLLA) are a coiled coil. A compositionally biased stretch (pro residues) spans 731 to 741 (PEAPGSAPPPA). The span at 754–779 (AASPSPARRVPATRRSPGPGPSQSPR) shows a compositional bias: low complexity. S769 bears the Phosphoserine mark. The residue at position 799 (T799) is a Phosphothreonine. The residue at position 814 (S814) is a Phosphoserine. Polar residues predominate over residues 814–825 (SPSQVPVQTRSS). A compositionally biased stretch (basic and acidic residues) spans 889–940 (YKDEDKPEDEMAQKRASLLERQQRRAEEARRRKQWQEVEKEQRREEAARLAQ). The stretch at 896-935 (EDEMAQKRASLLERQQRRAEEARRRKQWQEVEKEQRREEA) forms a coiled coil. Positions 950–964 (VSAVPMATPAPAARA) are enriched in low complexity. Residues 970–998 (VGPRKGDFTRQEYERRAQLKLMDDLDKVL) show a composition bias toward basic and acidic residues. Residue S1074 is modified to Phosphoserine. A CKK domain is found at 1109–1243 (GPRLYKEPSA…QGKKPTTPKK (135 aa)).

The protein belongs to the CAMSAP1 family. In terms of assembly, interacts with PLEKHA7. Interacts with CAMSAP2. Interacts with KATNA1 and KATNB1; leading to regulate the length of CAMSAP3-decorated microtubule stretches. Interacts with AKAP9; regulating Golgi assembly in epithelial cells. Interacts with MACF1. Interacts with AKNA.

The protein resides in the cytoplasm. Its subcellular location is the cytoskeleton. It localises to the cell junction. It is found in the adherens junction. The protein localises to the cilium axoneme. The protein resides in the cilium basal body. Functionally, key microtubule-organizing protein that specifically binds the minus-end of non-centrosomal microtubules and regulates their dynamics and organization. Specifically recognizes growing microtubule minus-ends and autonomously decorates and stabilizes microtubule lattice formed by microtubule minus-end polymerization. Acts on free microtubule minus-ends that are not capped by microtubule-nucleating proteins or other factors and protects microtubule minus-ends from depolymerization. In addition, it also reduces the velocity of microtubule polymerization. Required for the biogenesis and the maintenance of zonula adherens by anchoring the minus-end of microtubules to zonula adherens and by recruiting the kinesin KIFC3 to those junctional sites. Required for orienting the apical-to-basal polarity of microtubules in epithelial cells: acts by tethering non-centrosomal microtubules to the apical cortex, leading to their longitudinal orientation. Plays a key role in early embryos, which lack centrosomes: accumulates at the microtubule bridges that connect pairs of cells and enables the formation of a non-centrosomal microtubule-organizing center that directs intracellular transport in the early embryo. Couples non-centrosomal microtubules with actin: interaction with MACF1 at the minus ends of non-centrosomal microtubules, tethers the microtubules to actin filaments, regulating focal adhesion size and cell migration. Plays a key role in the generation of non-centrosomal microtubules by accumulating in the pericentrosomal region and cooperating with KATNA1 to release non-centrosomal microtubules from the centrosome. Through the microtubule cytoskeleton, also regulates the organization of cellular organelles including the Golgi and the early endosomes. Through interaction with AKAP9, involved in translocation of Golgi vesicles in epithelial cells, where microtubules are mainly non-centrosomal. Plays an important role in motile cilia function by facilitatating proper orientation of basal bodies and formation of central microtubule pairs in motile cilia. The protein is Calmodulin-regulated spectrin-associated protein 3 of Homo sapiens (Human).